Reading from the N-terminus, the 125-residue chain is Small ribosomal subunit protein uS12 (125 aa).

The disordered stretch occupies residues 1 to 31 (MPTINQLVRQGREVETTKSKSPAMQNSPQRR). Positions 19 to 29 (SKSPAMQNSPQ) are enriched in polar residues. Aspartate 89 carries the 3-methylthioaspartic acid modification.

It belongs to the universal ribosomal protein uS12 family. Part of the 30S ribosomal subunit. Contacts proteins S8 and S17. May interact with IF1 in the 30S initiation complex.

With S4 and S5 plays an important role in translational accuracy. In terms of biological role, interacts with and stabilizes bases of the 16S rRNA that are involved in tRNA selection in the A site and with the mRNA backbone. Located at the interface of the 30S and 50S subunits, it traverses the body of the 30S subunit contacting proteins on the other side and probably holding the rRNA structure together. The combined cluster of proteins S8, S12 and S17 appears to hold together the shoulder and platform of the 30S subunit. This is Small ribosomal subunit protein uS12 from Paracidovorax citrulli (strain AAC00-1) (Acidovorax citrulli).